The following is a 213-amino-acid chain: Thiamine-phosphate synthase (213 aa).

Residues 40 to 44 (QFREK) and Asn75 each bind 4-amino-2-methyl-5-(diphosphooxymethyl)pyrimidine. Mg(2+) is bound by residues Asp76 and Asp95. Ser113 contacts 4-amino-2-methyl-5-(diphosphooxymethyl)pyrimidine. 139–141 (TPS) provides a ligand contact to 2-[(2R,5Z)-2-carboxy-4-methylthiazol-5(2H)-ylidene]ethyl phosphate. Lys142 lines the 4-amino-2-methyl-5-(diphosphooxymethyl)pyrimidine pocket. Residues Gly171 and 191 to 192 (IS) contribute to the 2-[(2R,5Z)-2-carboxy-4-methylthiazol-5(2H)-ylidene]ethyl phosphate site.

Belongs to the thiamine-phosphate synthase family. Mg(2+) is required as a cofactor.

The enzyme catalyses 2-[(2R,5Z)-2-carboxy-4-methylthiazol-5(2H)-ylidene]ethyl phosphate + 4-amino-2-methyl-5-(diphosphooxymethyl)pyrimidine + 2 H(+) = thiamine phosphate + CO2 + diphosphate. The catalysed reaction is 2-(2-carboxy-4-methylthiazol-5-yl)ethyl phosphate + 4-amino-2-methyl-5-(diphosphooxymethyl)pyrimidine + 2 H(+) = thiamine phosphate + CO2 + diphosphate. It carries out the reaction 4-methyl-5-(2-phosphooxyethyl)-thiazole + 4-amino-2-methyl-5-(diphosphooxymethyl)pyrimidine + H(+) = thiamine phosphate + diphosphate. The protein operates within cofactor biosynthesis; thiamine diphosphate biosynthesis; thiamine phosphate from 4-amino-2-methyl-5-diphosphomethylpyrimidine and 4-methyl-5-(2-phosphoethyl)-thiazole: step 1/1. In terms of biological role, condenses 4-methyl-5-(beta-hydroxyethyl)thiazole monophosphate (THZ-P) and 2-methyl-4-amino-5-hydroxymethyl pyrimidine pyrophosphate (HMP-PP) to form thiamine monophosphate (TMP). The sequence is that of Thiamine-phosphate synthase from Staphylococcus aureus (strain MSSA476).